We begin with the raw amino-acid sequence, 690 residues long: CREB-H transcription factor homolog let-607 (690 aa).

Disordered stretches follow at residues 87-118, 166-192, and 205-253; these read NDNC…SSGG, SAVH…SNGL, and PASI…KYPP. Composition is skewed to low complexity over residues 100 to 116, 170 to 181, and 213 to 236; these read SLPI…YHSS, QNQQQQQRRLNQ, and PSSS…SSST. Residues 284–347 enclose the bZIP domain; the sequence is DLKRIRRKIR…QSVISQLKKL (64 aa). The basic motif stretch occupies residues 286-321; the sequence is KRIRRKIRNKRSAQTSRKRKQDYIEQLEDRVSESTK. Residues 295 to 350 are a coiled coil; that stretch reads KRSAQTSRKRKQDYIEQLEDRVSESTKENQALKQQIERLSSENQSVISQLKKLQAQ. The leucine-zipper stretch occupies residues 326-333; it reads LKQQIERL. A compositionally biased stretch (polar residues) spans 451 to 464; it reads HNNSKYPASGNQNH. 2 disordered regions span residues 451–495 and 509–536; these read HNNS…SMYR and GARK…ATSP. Composition is skewed to low complexity over residues 480–492 and 514–535; these read QPKQ…HQPS and SSTS…SATS.

Belongs to the bZIP family.

The protein localises to the nucleus. Its function is as follows. Probable transcription factor, required during migration of the gonadal distal tip cells (DTC). Probably regulates cell adhesion of DTCs via modulation of expression of genes involved in integrin-mediated adhesion, including tln-1, src-1, and integrin pat-2. Modulates expression of genes involved in protein trafficking during embryogenesis, including emo-1, sec-61, calu-1, sec-24.1, enpl-1, sar-1 and tfg-1. The chain is CREB-H transcription factor homolog let-607 from Caenorhabditis elegans.